Reading from the N-terminus, the 430-residue chain is uncharacterized protein (430 aa).

The first 19 residues, 1–19 (MKILLFVVLFFNVLVGIYS), serve as a signal peptide directing secretion. Asparagine 39 is a glycosylation site (N-linked (GlcNAc...) asparagine). The interval 119 to 408 (LDPNSSPSPS…ELLEKNSDGN (290 aa)) is disordered. Residues 124 to 168 (SPSPSPSPSPSPSPSPSPSPSPSPSPSPSPSPSPSPSPSPSPSPS) show a composition bias toward pro residues. Composition is skewed to low complexity over residues 169-253 (PSSS…TPSQ) and 263-285 (PTPT…TQTP). The segment covering 286–303 (ISSRPMSISTEKPSSSEE) has biased composition (polar residues). Asparagine 312 carries N-linked (GlcNAc...) asparagine glycosylation. Basic and acidic residues predominate over residues 316-325 (SEDKKKDSES). The segment covering 326–370 (KSSQSESPSPSASASESESASESASASTSVSVSASPLPIMDSSSS) has biased composition (low complexity). Asparagine 408 carries N-linked (GlcNAc...) asparagine glycosylation.

It localises to the secreted. This is an uncharacterized protein from Dictyostelium discoideum (Social amoeba).